The following is a 515-amino-acid chain: Maturase K (515 aa).

It belongs to the intron maturase 2 family. MatK subfamily.

The protein resides in the plastid. It is found in the chloroplast. Its function is as follows. Usually encoded in the trnK tRNA gene intron. Probably assists in splicing its own and other chloroplast group II introns. This Pinus attenuata (Knobcone pine) protein is Maturase K.